The following is a 243-amino-acid chain: Methylthioribulose-1-phosphate dehydratase (243 aa).

Cys-90 contributes to the substrate binding site. Residues His-108 and His-110 each coordinate Zn(2+). Glu-131 functions as the Proton donor/acceptor in the catalytic mechanism. Position 193 (His-193) interacts with Zn(2+).

This sequence belongs to the aldolase class II family. MtnB subfamily. Zn(2+) serves as cofactor.

It is found in the cytoplasm. The catalysed reaction is 5-(methylsulfanyl)-D-ribulose 1-phosphate = 5-methylsulfanyl-2,3-dioxopentyl phosphate + H2O. Its pathway is amino-acid biosynthesis; L-methionine biosynthesis via salvage pathway; L-methionine from S-methyl-5-thio-alpha-D-ribose 1-phosphate: step 2/6. In terms of biological role, catalyzes the dehydration of methylthioribulose-1-phosphate (MTRu-1-P) into 2,3-diketo-5-methylthiopentyl-1-phosphate (DK-MTP-1-P). The chain is Methylthioribulose-1-phosphate dehydratase from Zygosaccharomyces rouxii (strain ATCC 2623 / CBS 732 / NBRC 1130 / NCYC 568 / NRRL Y-229).